A 103-amino-acid polypeptide reads, in one-letter code: Co-chaperonin GroES (103 aa).

Belongs to the GroES chaperonin family. In terms of assembly, heptamer of 7 subunits arranged in a ring. Interacts with the chaperonin GroEL.

Its subcellular location is the plastid. It localises to the cyanelle. In terms of biological role, together with the chaperonin GroEL, plays an essential role in assisting protein folding. The GroEL-GroES system forms a nano-cage that allows encapsulation of the non-native substrate proteins and provides a physical environment optimized to promote and accelerate protein folding. GroES binds to the apical surface of the GroEL ring, thereby capping the opening of the GroEL channel. The chain is Co-chaperonin GroES from Cyanophora paradoxa.